Consider the following 475-residue polypeptide: Tubulin epsilon chain (475 aa).

148–154 (GGGTGSG) contacts GTP.

The protein belongs to the tubulin family. In terms of assembly, found in a complex with TEDC1, TEDC2, TUBE1 and TUBD1.

It localises to the cytoplasm. Its subcellular location is the cytoskeleton. It is found in the microtubule organizing center. The protein localises to the centrosome. The sequence is that of Tubulin epsilon chain (TUBE1) from Homo sapiens (Human).